Reading from the N-terminus, the 156-residue chain is MSMVVYNNQEGEEGNPFAGALTEFSQWLWSRPLGNPGAEDAEEEAIAAQEELEFPEDEAQARHSCLQRTTSWATPKEVSPSGRVYQTVRHSRMEYSRPTMSIRSQASYFSSSARPLPPPPVPSLMSWTPIAKYHPSSPTSTSSKLRRAAPKLIKRG.

A homodimerization region spans residues 38 to 54; that stretch reads AEDAEEEAIAAQEELEF. 2 disordered regions span residues 55 to 80 and 106 to 156; these read PEDE…EVSP and ASYF…IKRG. Residues 57–156 are RNA-binding; sequence DEAQARHSCL…RAAPKLIKRG (100 aa). A phosphoserine mark is found at S71, S79, S137, and S140. Over residues 144–156 the composition is skewed to basic residues; sequence KLRRAAPKLIKRG.

It belongs to the polerovirus movement protein family. Homodimer. Post-translationally, expressed as a nonphosphorylated 20kDa form and a phosphorylated 22kDa form. Phosphorylated by a host PKC-related kinase. Serine phosphorylation is required for plamodesma targeting.

Its subcellular location is the host cell junction. The protein localises to the host plasmodesma. The protein resides in the host chloroplast envelope. It localises to the host Golgi apparatus. It is found in the host mitochondrion outer membrane. Together with movement protein P3a, facilitates long-distance movement of virions in host. Transports viral genome to neighboring plant cells directly through plasmosdesmata, without any budding. The movement protein allows efficient cell to cell propagation, by bypassing the host cell wall barrier. Binds ssRNA. The chain is Movement protein P17 from Potato leafroll virus (strain Potato/Canada/Rowhani/1979) (PLrV).